Here is a 191-residue protein sequence, read N- to C-terminus: RNA pyrophosphohydrolase (191 aa).

The region spanning 6–149 (GYRLNVGIIL…KREVYRQALS (144 aa)) is the Nudix hydrolase domain. Positions 38 to 59 (GGIKVDEDPDAAMFRELYEEVG) match the Nudix box motif. The disordered stretch occupies residues 162–191 (GAQAVSDAGGTATRQIPVATEPSGPSSSQR).

The protein belongs to the Nudix hydrolase family. RppH subfamily. Requires a divalent metal cation as cofactor.

Its function is as follows. Accelerates the degradation of transcripts by removing pyrophosphate from the 5'-end of triphosphorylated RNA, leading to a more labile monophosphorylated state that can stimulate subsequent ribonuclease cleavage. The chain is RNA pyrophosphohydrolase from Methylococcus capsulatus (strain ATCC 33009 / NCIMB 11132 / Bath).